A 112-amino-acid polypeptide reads, in one-letter code: MKKIEAIIKPFKLDDVRESLSDVGITGMTVTEVRGFGRQKGHTELYRGAEYMVDFLPKVKMEIVVTDEQVDQCIEAIMETAQTGKIGDGKIFVYDVERVIRIRTGEENEDAI.

The residue at position 51 (Tyr-51) is an O-UMP-tyrosine.

Belongs to the P(II) protein family. As to quaternary structure, homotrimer. In terms of processing, uridylylated/deuridylylated by GlnD.

P-II indirectly controls the transcription of the glutamine synthetase gene (GlnA). P-II prevents NR-II-catalyzed conversion of NR-I to NR-I-phosphate, the transcriptional activator of GlnA. When P-II is uridylylated to P-II-UMP, these events are reversed. When the ratio of Gln to 2-ketoglutarate decreases, P-II is uridylylated to P-II-UMP, which causes the deadenylation of glutamine synthetase by GlnE, so activating the enzyme. This chain is Nitrogen regulatory protein P-II (glnB), found in Pasteurella multocida (strain Pm70).